The primary structure comprises 628 residues: Exonuclease V, mitochondrial (628 aa).

The N-terminal 21 residues, 1–21 (MSRFWHFKKFYFTSCYSMQRM), are a transit peptide targeting the mitochondrion. A disordered region spans residues 37-58 (TSEHEQVQSISKEESRSLSSND). Residues 38–52 (SEHEQVQSISKEESR) show a composition bias toward basic and acidic residues. Residues Cys164, Cys586, Cys589, and Cys595 each contribute to the [4Fe-4S] cluster site.

The protein belongs to the EXO5 family. Monomer. Mg(2+) is required as a cofactor. Requires [4Fe-4S] cluster as cofactor.

The protein resides in the mitochondrion. In terms of biological role, single strand DNA specific 5' exonuclease involved in mitochondrial DNA replication and recombination. Releases dinucleotides as main products of catalysis. Has the capacity to slide across 5'double-stranded DNA or 5'RNA sequences and resumes cutting two nucleotides downstream of the double-stranded-to-single-stranded junction or RNA-to-DNA junction, respectively. In Candida albicans (strain SC5314 / ATCC MYA-2876) (Yeast), this protein is Exonuclease V, mitochondrial (DEM1).